The primary structure comprises 390 residues: tRNA(Met) cytidine acetate ligase (390 aa).

ATP contacts are provided by residues V7–H20, G101, N162, and R187.

Belongs to the TmcAL family.

It is found in the cytoplasm. It carries out the reaction cytidine(34) in elongator tRNA(Met) + acetate + ATP = N(4)-acetylcytidine(34) in elongator tRNA(Met) + AMP + diphosphate. In terms of biological role, catalyzes the formation of N(4)-acetylcytidine (ac(4)C) at the wobble position of elongator tRNA(Met), using acetate and ATP as substrates. First activates an acetate ion to form acetyladenylate (Ac-AMP) and then transfers the acetyl group to tRNA to form ac(4)C34. The chain is tRNA(Met) cytidine acetate ligase from Listeria monocytogenes serotype 4b (strain CLIP80459).